Reading from the N-terminus, the 463-residue chain is Probable multidrug resistance protein YoeA (463 aa).

12 helical membrane passes run 24-44 (LFLV…LVGM), 56-76 (VAAV…TIGI), 106-126 (FTFL…LDIL), 143-163 (ARIL…TTFL), 177-197 (IVST…MFGF), 202-222 (IYGS…VLMV), 256-276 (VPAS…ISFV), 293-313 (VASY…IFAA), 330-350 (VGIW…YVFS), 370-390 (LLMI…ISAT), 397-417 (VLWP…PVAF), and 427-447 (ILGV…LIYG).

It belongs to the multi antimicrobial extrusion (MATE) (TC 2.A.66.1) family.

The protein resides in the cell membrane. In Bacillus subtilis (strain 168), this protein is Probable multidrug resistance protein YoeA (yoeA).